Here is a 181-residue protein sequence, read N- to C-terminus: ECF RNA polymerase sigma factor RpoE (181 aa).

A sigma-70 factor domain-2 region spans residues 29-96 (LFQHFAPKVK…RRIDGLRKDR (68 aa)). Residues 53-56 (ECAQ) carry the Interaction with polymerase core subunit RpoC motif. A sigma-70 factor domain-4 region spans residues 129–178 (AIARLPEAQRALIERAFFGDLTHRELAAETGLPLGTIKSRIRLALDRLRQ). A DNA-binding region (H-T-H motif) is located at residues 151-170 (HRELAAETGLPLGTIKSRIR).

The protein belongs to the sigma-70 factor family. ECF subfamily. As to quaternary structure, interacts transiently with the RNA polymerase catalytic core formed by RpoA, RpoB, RpoC and RpoZ (2 alpha, 1 beta, 1 beta' and 1 omega subunit) to form the RNA polymerase holoenzyme that can initiate transcription. Forms a 1:1 complex (via sigma-70 factor domain 4) with anti-sigma factor ChrR; this inhibits the interaction of RpoE with the RNA polymerase catalytic core.

Sigma factors are initiation factors that promote the attachment of RNA polymerase to specific initiation sites and are then released. Extracytoplasmic function (ECF) sigma factors are held in an inactive form by a cognate anti-sigma factor until released. Sigma-E controls a transcriptional response to singlet oxygen, a by-product of photosynthesis; its continuous activity requires constant exposure to singlet oxygen. The regulon has about 180 genes that protect against or repair damage induced by singlet oxygen, including itself and rpoH2, a heat shock-responsive sigma factor. The polypeptide is ECF RNA polymerase sigma factor RpoE (rpoE) (Cereibacter sphaeroides (strain ATCC 17023 / DSM 158 / JCM 6121 / CCUG 31486 / LMG 2827 / NBRC 12203 / NCIMB 8253 / ATH 2.4.1.) (Rhodobacter sphaeroides)).